Reading from the N-terminus, the 436-residue chain is GTPase Der (436 aa).

2 EngA-type G domains span residues 4–167 (PTVA…PVEE) and 175–351 (IRFS…ESQN). GTP-binding positions include 10 to 17 (GRPNVGKS), 57 to 61 (DTGGI), 119 to 122 (NKVD), 181 to 188 (GRPNVGKS), 229 to 233 (DTAGM), and 294 to 297 (NKWD). Positions 352–436 (KRIPSAVLND…PIHLIARKRK (85 aa)) constitute a KH-like domain.

Belongs to the TRAFAC class TrmE-Era-EngA-EngB-Septin-like GTPase superfamily. EngA (Der) GTPase family. Associates with the 50S ribosomal subunit.

In terms of biological role, GTPase that plays an essential role in the late steps of ribosome biogenesis. This chain is GTPase Der, found in Streptococcus pyogenes serotype M28 (strain MGAS6180).